We begin with the raw amino-acid sequence, 238 residues long: Probable septum site-determining protein MinC (238 aa).

It belongs to the MinC family. Interacts with MinD and FtsZ.

In terms of biological role, cell division inhibitor that blocks the formation of polar Z ring septums. Rapidly oscillates between the poles of the cell to destabilize FtsZ filaments that have formed before they mature into polar Z rings. Prevents FtsZ polymerization. The protein is Probable septum site-determining protein MinC of Aeromonas salmonicida (strain A449).